Here is a 126-residue protein sequence, read N- to C-terminus: Fluoride-specific ion channel FluC (126 aa).

2 helical membrane passes run 2–22 (IKSLFAVIIGGSVGCTLRWLL) and 36–56 (GTLVVNLLAGLIIGTALAYFL). Na(+) is bound by residues Gly75 and Ser78. A run of 2 helical transmembrane segments spans residues 80–100 (FSTFSVEVFALLQAGNYIWAL) and 105–125 (VHVIGSLIMTALGFFIITILF).

Belongs to the fluoride channel Fluc/FEX (TC 1.A.43) family. In terms of assembly, homodimer.

The protein localises to the cell inner membrane. It catalyses the reaction fluoride(in) = fluoride(out). Na(+) is not transported, but it plays an essential structural role and its presence is essential for fluoride channel function. In terms of biological role, fluoride-specific ion channel. Important for reducing fluoride concentration in the cell, thus reducing its toxicity. Is highly specific for fluoride ions and cannot transport chloride ions. The chain is Fluoride-specific ion channel FluC from Escherichia coli O1:K1 / APEC.